The chain runs to 263 residues: Tryptophan synthase alpha chain (263 aa).

Active-site proton acceptor residues include glutamate 49 and aspartate 60.

It belongs to the TrpA family. In terms of assembly, tetramer of two alpha and two beta chains.

It catalyses the reaction (1S,2R)-1-C-(indol-3-yl)glycerol 3-phosphate + L-serine = D-glyceraldehyde 3-phosphate + L-tryptophan + H2O. Its pathway is amino-acid biosynthesis; L-tryptophan biosynthesis; L-tryptophan from chorismate: step 5/5. In terms of biological role, the alpha subunit is responsible for the aldol cleavage of indoleglycerol phosphate to indole and glyceraldehyde 3-phosphate. The protein is Tryptophan synthase alpha chain of Cereibacter sphaeroides (strain ATCC 17025 / ATH 2.4.3) (Rhodobacter sphaeroides).